We begin with the raw amino-acid sequence, 361 residues long: Probable dual-specificity RNA methyltransferase RlmN (361 aa).

The active-site Proton acceptor is E91. One can recognise a Radical SAM core domain in the interval 97-329; the sequence is QHYGLSVCVT…KKKGVNCVVR (233 aa). The cysteines at positions 104 and 340 are disulfide-linked. [4Fe-4S] cluster is bound by residues C111, C115, and C118. S-adenosyl-L-methionine-binding positions include 163–164, S195, 218–220, and N296; these read GE and SLH. Residue C340 is the S-methylcysteine intermediate of the active site.

It belongs to the radical SAM superfamily. RlmN family. [4Fe-4S] cluster is required as a cofactor.

It localises to the cytoplasm. The enzyme catalyses adenosine(2503) in 23S rRNA + 2 reduced [2Fe-2S]-[ferredoxin] + 2 S-adenosyl-L-methionine = 2-methyladenosine(2503) in 23S rRNA + 5'-deoxyadenosine + L-methionine + 2 oxidized [2Fe-2S]-[ferredoxin] + S-adenosyl-L-homocysteine. The catalysed reaction is adenosine(37) in tRNA + 2 reduced [2Fe-2S]-[ferredoxin] + 2 S-adenosyl-L-methionine = 2-methyladenosine(37) in tRNA + 5'-deoxyadenosine + L-methionine + 2 oxidized [2Fe-2S]-[ferredoxin] + S-adenosyl-L-homocysteine. In terms of biological role, specifically methylates position 2 of adenine 2503 in 23S rRNA and position 2 of adenine 37 in tRNAs. The polypeptide is Probable dual-specificity RNA methyltransferase RlmN (Streptococcus pneumoniae serotype 4 (strain ATCC BAA-334 / TIGR4)).